The following is a 351-amino-acid chain: Protein RecA (351 aa).

Gly-73–Thr-80 contacts ATP.

Belongs to the RecA family.

It localises to the cytoplasm. Functionally, can catalyze the hydrolysis of ATP in the presence of single-stranded DNA, the ATP-dependent uptake of single-stranded DNA by duplex DNA, and the ATP-dependent hybridization of homologous single-stranded DNAs. It interacts with LexA causing its activation and leading to its autocatalytic cleavage. This chain is Protein RecA, found in Oleidesulfovibrio alaskensis (strain ATCC BAA-1058 / DSM 17464 / G20) (Desulfovibrio alaskensis).